Consider the following 472-residue polypeptide: RNA pseudouridine synthase 6, chloroplastic (472 aa).

The transit peptide at 1 to 66 (MASPALTGGY…TDSQNQTTLS (66 aa)) directs the protein to the chloroplast. The 108-residue stretch at 101 to 208 (VLVSEFISKQ…SPRCYEIDWK (108 aa)) folds into the S4 RNA-binding domain. Residue D261 is part of the active site.

The protein belongs to the pseudouridine synthase RluA family.

It localises to the plastid. The protein resides in the chloroplast. The enzyme catalyses a uridine in RNA = a pseudouridine in RNA. The polypeptide is RNA pseudouridine synthase 6, chloroplastic (Arabidopsis thaliana (Mouse-ear cress)).